We begin with the raw amino-acid sequence, 641 residues long: Chaperone protein DnaK (641 aa).

Phosphothreonine; by autocatalysis is present on Thr-200. Positions 606–623 are enriched in low complexity; that stretch reads AEQGGNADAASGNAQASK. The segment at 606–628 is disordered; it reads AEQGGNADAASGNAQASKAADDV.

Belongs to the heat shock protein 70 family.

Its function is as follows. Acts as a chaperone. The polypeptide is Chaperone protein DnaK (Xanthomonas axonopodis pv. citri (strain 306)).